Consider the following 466-residue polypeptide: ATP synthase subunit beta (466 aa).

148-155 provides a ligand contact to ATP; sequence GGAGVGKT.

The protein belongs to the ATPase alpha/beta chains family. In terms of assembly, F-type ATPases have 2 components, CF(1) - the catalytic core - and CF(0) - the membrane proton channel. CF(1) has five subunits: alpha(3), beta(3), gamma(1), delta(1), epsilon(1). CF(0) has three main subunits: a(1), b(2) and c(9-12). The alpha and beta chains form an alternating ring which encloses part of the gamma chain. CF(1) is attached to CF(0) by a central stalk formed by the gamma and epsilon chains, while a peripheral stalk is formed by the delta and b chains.

The protein localises to the cell inner membrane. The catalysed reaction is ATP + H2O + 4 H(+)(in) = ADP + phosphate + 5 H(+)(out). Produces ATP from ADP in the presence of a proton gradient across the membrane. The catalytic sites are hosted primarily by the beta subunits. The sequence is that of ATP synthase subunit beta from Xylella fastidiosa (strain 9a5c).